The primary structure comprises 363 residues: Dihydroorotate dehydrogenase (quinone) (363 aa).

FMN-binding positions include 67-71 (AGYDK) and Thr-91. Lys-71 serves as a coordination point for substrate. Position 116–120 (116–120 (NRMGF)) interacts with substrate. The FMN site is built by Asn-145 and Asn-178. Asn-178 provides a ligand contact to substrate. Ser-181 (nucleophile) is an active-site residue. Asn-183 contributes to the substrate binding site. Residues Lys-224 and Thr-254 each contribute to the FMN site. 255-256 (NT) is a substrate binding site. FMN is bound by residues Gly-275, Gly-304, and 325–326 (YS).

This sequence belongs to the dihydroorotate dehydrogenase family. Type 2 subfamily. Monomer. FMN is required as a cofactor.

Its subcellular location is the cell membrane. The enzyme catalyses (S)-dihydroorotate + a quinone = orotate + a quinol. It functions in the pathway pyrimidine metabolism; UMP biosynthesis via de novo pathway; orotate from (S)-dihydroorotate (quinone route): step 1/1. Its function is as follows. Catalyzes the conversion of dihydroorotate to orotate with quinone as electron acceptor. The chain is Dihydroorotate dehydrogenase (quinone) from Acidithiobacillus ferrooxidans (strain ATCC 23270 / DSM 14882 / CIP 104768 / NCIMB 8455) (Ferrobacillus ferrooxidans (strain ATCC 23270)).